Here is a 524-residue protein sequence, read N- to C-terminus: Ribonuclease Y (524 aa).

Residues 3 to 23 form a helical membrane-spanning segment; it reads IVINLLLLVLAALVAFVAGFF. Residues 214 to 280 form the KH domain; sequence ALSVVHIQSD…KLTLKKLLAD (67 aa). The 93-residue stretch at 340–432 folds into the HD domain; that stretch reads LLQHSREVAM…VDAANTISLS (93 aa).

It belongs to the RNase Y family.

The protein resides in the cell membrane. In terms of biological role, endoribonuclease that initiates mRNA decay. The polypeptide is Ribonuclease Y (Chlorobium chlorochromatii (strain CaD3)).